The sequence spans 520 residues: GMP synthase [glutamine-hydrolyzing] (520 aa).

The Glutamine amidotransferase type-1 domain occupies 13-205; the sequence is KIIVLDYGSQ…ALNICKAKGD (193 aa). Cys-90 functions as the Nucleophile in the catalytic mechanism. Catalysis depends on residues His-179 and Glu-181. The GMPS ATP-PPase domain maps to 206-395; sequence WSMDNFIDMQ…LGMPDHIVWR (190 aa). 233–239 contacts ATP; the sequence is SGGVDSS.

As to quaternary structure, homodimer.

It carries out the reaction XMP + L-glutamine + ATP + H2O = GMP + L-glutamate + AMP + diphosphate + 2 H(+). Its pathway is purine metabolism; GMP biosynthesis; GMP from XMP (L-Gln route): step 1/1. Catalyzes the synthesis of GMP from XMP. This chain is GMP synthase [glutamine-hydrolyzing], found in Streptococcus pneumoniae (strain CGSP14).